A 112-amino-acid chain; its full sequence is uncharacterized protein (112 aa).

A run of 2 helical transmembrane segments spans residues 44–63 and 68–90; these read VITG…LHSL and LAAL…KLVH.

It is found in the cell membrane. This is an uncharacterized protein from Archaeoglobus fulgidus (strain ATCC 49558 / DSM 4304 / JCM 9628 / NBRC 100126 / VC-16).